We begin with the raw amino-acid sequence, 179 residues long: Peptide deformylase 2 (179 aa).

Fe cation contacts are provided by Cys101 and His143. Residue Glu144 is part of the active site. Residue His147 coordinates Fe cation.

It belongs to the polypeptide deformylase family. Fe(2+) serves as cofactor.

It catalyses the reaction N-terminal N-formyl-L-methionyl-[peptide] + H2O = N-terminal L-methionyl-[peptide] + formate. Its function is as follows. Removes the formyl group from the N-terminal Met of newly synthesized proteins. Requires at least a dipeptide for an efficient rate of reaction. N-terminal L-methionine is a prerequisite for activity but the enzyme has broad specificity at other positions. The chain is Peptide deformylase 2 from Pseudomonas syringae pv. tomato (strain ATCC BAA-871 / DC3000).